The sequence spans 214 residues: ATP-dependent Clp protease proteolytic subunit (214 aa).

The Nucleophile role is filled by Ser114. The active site involves His139.

Belongs to the peptidase S14 family. In terms of assembly, fourteen ClpP subunits assemble into 2 heptameric rings which stack back to back to give a disk-like structure with a central cavity, resembling the structure of eukaryotic proteasomes.

The protein resides in the cytoplasm. The enzyme catalyses Hydrolysis of proteins to small peptides in the presence of ATP and magnesium. alpha-casein is the usual test substrate. In the absence of ATP, only oligopeptides shorter than five residues are hydrolyzed (such as succinyl-Leu-Tyr-|-NHMec, and Leu-Tyr-Leu-|-Tyr-Trp, in which cleavage of the -Tyr-|-Leu- and -Tyr-|-Trp bonds also occurs).. Its function is as follows. Cleaves peptides in various proteins in a process that requires ATP hydrolysis. Has a chymotrypsin-like activity. Plays a major role in the degradation of misfolded proteins. This Nitrosomonas europaea (strain ATCC 19718 / CIP 103999 / KCTC 2705 / NBRC 14298) protein is ATP-dependent Clp protease proteolytic subunit.